We begin with the raw amino-acid sequence, 313 residues long: Porphobilinogen deaminase (313 aa).

Cysteine 249 is modified (S-(dipyrrolylmethanemethyl)cysteine).

Belongs to the HMBS family. Monomer. The cofactor is dipyrromethane.

It catalyses the reaction 4 porphobilinogen + H2O = hydroxymethylbilane + 4 NH4(+). It participates in porphyrin-containing compound metabolism; protoporphyrin-IX biosynthesis; coproporphyrinogen-III from 5-aminolevulinate: step 2/4. Its function is as follows. Tetrapolymerization of the monopyrrole PBG into the hydroxymethylbilane pre-uroporphyrinogen in several discrete steps. The protein is Porphobilinogen deaminase of Paracoccus denitrificans (strain Pd 1222).